The sequence spans 330 residues: Pantothenate synthetase 2 (330 aa).

His55 functions as the Proton donor in the catalytic mechanism. ATP is bound by residues 167-170 (GEKD), Val196, and 204-207 (ASSR).

This sequence belongs to the pantothenate synthetase family. In terms of assembly, homodimer.

It localises to the cytoplasm. The catalysed reaction is (R)-pantoate + beta-alanine + ATP = (R)-pantothenate + AMP + diphosphate + H(+). It functions in the pathway cofactor biosynthesis; (R)-pantothenate biosynthesis; (R)-pantothenate from (R)-pantoate and beta-alanine: step 1/1. Functionally, catalyzes the condensation of pantoate with beta-alanine in an ATP-dependent reaction via a pantoyl-adenylate intermediate. The polypeptide is Pantothenate synthetase 2 (Frankia alni (strain DSM 45986 / CECT 9034 / ACN14a)).